A 620-amino-acid chain; its full sequence is MHYIRELLIVVFTSCPALSYAHSSLDGSRYCRCQPGEACWPSLADWQALNSSIQGNLVEVRPIGHVCHEPTYNKAACERVSKLSSNGTWRANQPGAQQEYAWEVSLSRNESCYVGPDNPTEPCSQGRIPRYSAMVETTEQAQKAIMFARERQLRLVIKNTGHDSGGRSSAVDSFQILTQRLKDITFIPEFTPTLGLAEGTYKSKGPSVRIGAGVLTKELYAAADEHGYTVMGGECATVGIAGGYIQGGGVSTALTPMLGLAVDLVQEFEVITAEGRHVIANEFQNQDLFWALRGGGGGTFGLVTSVTMPVFGAMPAVISELTFESQEPGEPFWRAVKEVIYATRDLSTGGNSGQYWIGRGPTGSYFVRLTLFFIGEMDTGKMGGKVGSLLSALQDQEIGFHLNSTAYDRLSSFLAIPQGEFVGGIAFHQENILIPRGFYDSPEGPAELVNRLAEVKLNPGDMWVANALGGKVMANKDSVDNAMHPGWRTAAVLLVGNRIFEPVLEAQRAVQERMTAVEGPLLHSLGPPGPVAIYLNEADADLENWQEWFWGEKYNRLRDIKRKWDPDDLFLVRHGVGSEDWDEEGMCWIQMSIEECPVREPSQCTCPSFGCPMRHVPGLL.

Positions 1–21 (MHYIRELLIVVFTSCPALSYA) are cleaved as a signal peptide. N-linked (GlcNAc...) asparagine glycosylation is found at Asn-50, Asn-86, and Asn-109. In terms of domain architecture, FAD-binding PCMH-type spans 124 to 313 (SQGRIPRYSA…TSVTMPVFGA (190 aa)). Residue Asn-403 is glycosylated (N-linked (GlcNAc...) asparagine).

Belongs to the oxygen-dependent FAD-linked oxidoreductase family. The cofactor is FAD.

Its pathway is alkaloid biosynthesis. FAD-linked oxidoreductase; part of the gene cluster that mediates the biosynthesis of notoamide, a fungal indole alkaloid that belongs to a family of natural products containing a characteristic bicyclo[2.2.2]diazaoctane core. The first step of notoamide biosynthesis involves coupling of L-proline and L-tryptophan by the bimodular NRPS notE, to produce cyclo-L-tryptophan-L-proline called brevianamide F. The reverse prenyltransferase notF then acts as a deoxybrevianamide E synthase and converts brevianamide F to deoxybrevianamide E via reverse prenylation at C-2 of the indole ring leading to the bicyclo[2.2.2]diazaoctane core. Deoxybrevianamide E is further hydroxylated at C-6 of the indole ring, likely catalyzed by the cytochrome P450 monooxygenase notG, to yield 6-hydroxy-deoxybrevianamide E. 6-hydroxy-deoxybrevianamide E is a specific substrate of the prenyltransferase notC for normal prenylation at C-7 to produce 6-hydroxy-7-prenyl-deoxybrevianamide, also called notoamide S. As the proposed pivotal branching point in notoamide biosynthesis, notoamide S can be diverted to notoamide E through an oxidative pyran ring closure putatively catalyzed by either notH cytochrome P450 monooxygenase or the notD FAD-linked oxidoreductase. This step would be followed by an indole 2,3-epoxidation-initiated pinacol-like rearrangement catalyzed by the notB FAD-dependent monooxygenase leading to the formation of notoamide C and notoamide D. On the other hand notoamide S is converted to notoamide T by notH (or notD), a bifunctional oxidase that also functions as the intramolecular Diels-Alderase responsible for generation of (+)-notoamide T. To generate antipodal (-)-notoaminide T, notH' (or notD') in Aspergillus versicolor is expected to catalyze a Diels-Alder reaction leading to the opposite stereochemistry. The remaining oxidoreductase notD (or notH) likely catalyzes the oxidative pyran ring formation to yield (+)-stephacidin A. The FAD-dependent monooxygenase notI is highly similar to notB and is predicted to catalyze a similar conversion from (+)-stephacidin A to (-)-notoamide B via the 2,3-epoxidation of (+)-stephacidin A followed by a pinacol-type rearrangement. Finally, it remains unclear which enzyme could be responsible for the final hydroxylation steps leading to notoamide A and sclerotiamide. This Aspergillus sp. (strain MF297-2) protein is FAD-linked oxidoreductase notD.